A 143-amino-acid chain; its full sequence is Midkine (143 aa).

Positions 1–20 (MQHRGFLLLTLLALLALTSA) are cleaved as a signal peptide. Intrachain disulfides connect Cys-37–Cys-61, Cys-45–Cys-70, Cys-52–Cys-74, Cys-84–Cys-116, and Cys-94–Cys-126.

The protein belongs to the pleiotrophin family. Homodimer. Interacts with ALK. Interacts with LRP1; promotes neuronal survival. Interacts with LRP2. Interacts with NCAM1. Interacts (via C-terminal) with PTPRZ1 (via chondroitin sulfate chains); this interaction is inhibited by PTN; this interaction promotes neuronal migration. Interacts with NCL; this interaction promotes NCL clustering and lateral movements of this complex into lipid rafts leading to MDK internalization. Interacts with LRP6 and LRP8: this interaction is calcium dependent. Interacts with ITGA4. Interacts with ITGA6. Interacts with ITGB1. Interacts with ITGA4:ITGB1 complex; this interaction mediates MDK-induced osteoblast cells migration through PXN phosphorylation. Interacts with ITGA6:ITGB1 complex; this interaction mediates MDK-induced neurite outgrowth. Interacts with NOTCH2; this interaction mediates a nuclear accumulation of NOTCH2 and therefore activation of NOTCH2 signaling leading to interaction between HES1 and STAT3. Interacts with GPC2 (via heparan sulfate chain); this interaction is inhibited by heparin followed by chondroitin sulfate E; this interaction induces GPC2 clustering through heparan sulfate chain; this interaction induces neuronal cell adhesion and neurite outgrowth. Interacts with SDC3; this interaction induces SDC3 clustering; this interaction induces neuronal cell adhesion and neurite outgrowth. Interacts with SDC1. Interacts with CSPG5; this interaction promotes elongation of oligodendroglial precursor-like cells. As to expression, expressed in various tumor cell lines. In insulinoma tissue predominantly expressed in precancerous lesions.

The protein localises to the secreted. Secreted protein that functions as a cytokine and growth factor and mediates its signal through cell-surface proteoglycan and non-proteoglycan receptors. Binds cell-surface proteoglycan receptors via their chondroitin sulfate (CS) groups. Thereby regulates many processes like inflammatory response, cell proliferation, cell adhesion, cell growth, cell survival, tissue regeneration, cell differentiation and cell migration. Participates in inflammatory processes by exerting two different activities. Firstly, mediates neutrophils and macrophages recruitment to the sites of inflammation both by direct action by cooperating namely with ITGB2 via LRP1 and by inducing chemokine expression. This inflammation can be accompanied by epithelial cell survival and smooth muscle cell migration after renal and vessel damage, respectively. Secondly, suppresses the development of tolerogenic dendric cells thereby inhibiting the differentiation of regulatory T cells and also promote T cell expansion through NFAT signaling and Th1 cell differentiation. Promotes tissue regeneration after injury or trauma. After heart damage negatively regulates the recruitment of inflammatory cells and mediates cell survival through activation of anti-apoptotic signaling pathways via MAPKs and AKT pathways through the activation of angiogenesis. Also facilitates liver regeneration as well as bone repair by recruiting macrophage at trauma site and by promoting cartilage development by facilitating chondrocyte differentiation. Plays a role in brain by promoting neural precursor cells survival and growth through interaction with heparan sulfate proteoglycans. Binds PTPRZ1 and promotes neuronal migration and embryonic neurons survival. Binds SDC3 or GPC2 and mediates neurite outgrowth and cell adhesion. Binds chondroitin sulfate E and heparin leading to inhibition of neuronal cell adhesion induced by binding with GPC2. Binds CSPG5 and promotes elongation of oligodendroglial precursor-like cells. Also binds ITGA6:ITGB1 complex; this interaction mediates MDK-induced neurite outgrowth. Binds LRP1; promotes neuronal survival. Binds ITGA4:ITGB1 complex; this interaction mediates MDK-induced osteoblast cells migration through PXN phosphorylation. Binds anaplastic lymphoma kinase (ALK) which induces ALK activation and subsequent phosphorylation of the insulin receptor substrate (IRS1), followed by the activation of mitogen-activated protein kinase (MAPK) and PI3-kinase, and the induction of cell proliferation. Promotes epithelial to mesenchymal transition through interaction with NOTCH2. During arteriogenesis, plays a role in vascular endothelial cell proliferation by inducing VEGFA expression and release which in turn induces nitric oxide synthase expression. Moreover activates vasodilation through nitric oxide synthase activation. Negatively regulates bone formation in response to mechanical load by inhibiting Wnt/beta-catenin signaling in osteoblasts. In addition plays a role in hippocampal development, working memory, auditory response, early fetal adrenal gland development and the female reproductive system. The chain is Midkine from Homo sapiens (Human).